Consider the following 527-residue polypeptide: V-set and immunoglobulin domain-containing protein 10 (527 aa).

An N-terminal signal peptide occupies residues 1 to 13; the sequence is MWTRRWIQFLVLC. Ig-like C2-type domains lie at 14–111, 123–212, 216–306, and 310–399; these read LHLW…LKVS, PTRT…RQLL, PPIT…CQIQ, and PLLE…KEIN. Residues 23–409 are Extracellular-facing; sequence YLGVFRGDVN…VWLTVNKPHN (387 aa). 16 N-linked (GlcNAc...) asparagine glycosylation sites follow: Asn-32, Asn-41, Asn-52, Asn-64, Asn-74, Asn-90, Asn-129, Asn-139, Asn-191, Asn-206, Asn-226, Asn-260, Asn-276, Asn-325, Asn-346, and Asn-375. Residues Cys-144 and Cys-194 are joined by a disulfide bond. Cys-238 and Cys-288 are joined by a disulfide. Residues Cys-330 and Cys-387 are joined by a disulfide bond. Residues 410 to 430 traverse the membrane as a helical segment; it reads IVGLVTALLLLFLLVVAIITG. Residues 431–527 are Cytoplasmic-facing; it reads TVLYCDPQIY…TGEENQNEEI (97 aa). Residues 501 to 527 form a disordered region; sequence RPPESTSSDLFSEVSDDTGEENQNEEI. Acidic residues predominate over residues 514–527; it reads VSDDTGEENQNEEI.

Its subcellular location is the membrane. The chain is V-set and immunoglobulin domain-containing protein 10 (vsig10) from Xenopus laevis (African clawed frog).